Here is a 315-residue protein sequence, read N- to C-terminus: Oxalate oxidoreductase subunit delta (315 aa).

4Fe-4S ferredoxin-type domains lie at 252-280 (QRPIIDREACTECYTCWIYCPDSCITRTE) and 281-310 (EGPVFNMKYCKGCGLCTAVCPSGALTNVPE). Residues Cys261, Cys264, Cys267, Cys271, Cys290, Cys293, Cys296, and Cys300 each contribute to the [4Fe-4S] cluster site.

Dimer of heterotrimer of one alpha, one beta and one delta subunit. Requires [4Fe-4S] cluster as cofactor.

It carries out the reaction oxidized 2[4Fe-4S]-[ferredoxin] + oxalate = reduced 2[4Fe-4S]-[ferredoxin] + 2 CO2. Its function is as follows. Catalyzes the anaerobic oxidation of oxalate using a broad range of electron acceptors, including ferredoxin and the nickel-dependent carbon monoxide dehydrogenase. Does not require coenzyme A as cosubstrate. Enables anaerobic growth on oxalate which is used as energy source by the bacteria. This chain is Oxalate oxidoreductase subunit delta, found in Moorella thermoacetica (strain ATCC 39073 / JCM 9320).